A 323-amino-acid chain; its full sequence is MAVPPVEMYSGSFWNRMRKPLPLRTQVIRFTVVFVIVSFILVVALQITHERMPDPKVTKPLPDLGFELLTKVPGMYVLADCCIGFLNILSVFTAFKLYLLHRHCVGSGEPELPCNIPGVSRFFLSVWLCKENCRIELRNIHTIAWIRFITSYALLLLSRSIIMVVTSLPNPDDLCQNPPKIENRVKDILLTVLTAGAGSIHCGDLMYSGHTVILTLHLMFHWIYGAMVHWSFRPVVTVVAIFGYYCIVASRFHYTDDVLVAIYLTIATFIAVGHNADGAPWQLQLFIRWWPCCGANSREVAEDGVPVAIVIKNEEMMNFEGKS.

Residues 1 to 26 (MAVPPVEMYSGSFWNRMRKPLPLRTQ) are Cytoplasmic-facing. Residues 27–47 (VIRFTVVFVIVSFILVVALQI) traverse the membrane as a helical segment. Topologically, residues 48–74 (THERMPDPKVTKPLPDLGFELLTKVPG) are extracellular. Residues 75–95 (MYVLADCCIGFLNILSVFTAF) form a helical membrane-spanning segment. The Cytoplasmic segment spans residues 96–147 (KLYLLHRHCVGSGEPELPCNIPGVSRFFLSVWLCKENCRIELRNIHTIAWIR). Residues 148-168 (FITSYALLLLSRSIIMVVTSL) traverse the membrane as a helical segment. At 169–187 (PNPDDLCQNPPKIENRVKD) the chain is on the extracellular side. A helical membrane pass occupies residues 188 to 208 (ILLTVLTAGAGSIHCGDLMYS). At 209 to 233 (GHTVILTLHLMFHWIYGAMVHWSFR) the chain is on the cytoplasmic side. A helical transmembrane segment spans residues 234–254 (PVVTVVAIFGYYCIVASRFHY). Topologically, residues 255-257 (TDD) are extracellular. Residues 258–278 (VLVAIYLTIATFIAVGHNADG) traverse the membrane as a helical segment. At 279 to 323 (APWQLQLFIRWWPCCGANSREVAEDGVPVAIVIKNEEMMNFEGKS) the chain is on the cytoplasmic side.

Belongs to the sphingomyelin synthase family.

It localises to the membrane. It carries out the reaction an N-acylsphing-4-enine + a 1,2-diacyl-sn-glycero-3-phosphoethanolamine = an N-acylsphing-4-enine 1-phosphoethanolamine + a 1,2-diacyl-sn-glycerol. The catalysed reaction is an N-acylsphinganine + a 1,2-diacyl-sn-glycero-3-phosphoethanolamine = an N-acylsphinganine-1-phosphoethanolamine + a 1,2-diacyl-sn-glycerol. Its function is as follows. Predominantly synthesizes ethanolamine-phosphorylceramide (EPC), with minimal sphingomyelin (SM)/inositol phosphorylceramide (IPC) synthase activity. Specificity is likely to be defined by residues in the lumenal catalytic domain that interact with the polar head groups of the phospholipid donors. EPC is synthesized by both stages of the parasite life cycle, bloodstream forms (BSF) and procyclic forms (PCF), by transferring the phosphoethanolamine from a 1,2-diacyl-sn-glycero-3-phosphoethanolamine to an N-acylsphing-4-enine (ceramide) or an N-acylsphinganine (dihydroceramide). Similarly, SM is synthesized by transferring the phosphocholine from a 1,2-diacyl-sn-glycero-3-phosphocholine to ceramide or dihydroceramide by BSF and PCF, while IPC is confined to PCF. The ceramide/dihydroceramide ratios are skewed towards dihydroceramide in PCF parasites and ceramide in BSF parasites, this is likely due to differential expression and/or regulation of dihydroceramide desaturase, the enzyme responsible for converting dihydroceramide to ceramide. The polypeptide is Phosphatidylethanolamine:ceramide ethanolaminephosphotransferase (Trypanosoma brucei brucei).